Here is a 193-residue protein sequence, read N- to C-terminus: Potassium-transporting ATPase KdpC subunit (193 aa).

Residues 14-34 (ITFTFLVLCGLVYPLIVTGIA) traverse the membrane as a helical segment.

The protein belongs to the KdpC family. In terms of assembly, the system is composed of three essential subunits: KdpA, KdpB and KdpC.

The protein localises to the cell membrane. Part of the high-affinity ATP-driven potassium transport (or Kdp) system, which catalyzes the hydrolysis of ATP coupled with the electrogenic transport of potassium into the cytoplasm. This subunit acts as a catalytic chaperone that increases the ATP-binding affinity of the ATP-hydrolyzing subunit KdpB by the formation of a transient KdpB/KdpC/ATP ternary complex. This Bacillus cereus (strain G9842) protein is Potassium-transporting ATPase KdpC subunit.